The sequence spans 124 residues: Small ribosomal subunit protein uS12 (124 aa).

A disordered region spans residues methionine 1–proline 28. Aspartate 89 bears the 3-methylthioaspartic acid mark. Residues threonine 104 to aspartate 124 are disordered.

Belongs to the universal ribosomal protein uS12 family. In terms of assembly, part of the 30S ribosomal subunit. Contacts proteins S8 and S17. May interact with IF1 in the 30S initiation complex.

With S4 and S5 plays an important role in translational accuracy. Its function is as follows. Interacts with and stabilizes bases of the 16S rRNA that are involved in tRNA selection in the A site and with the mRNA backbone. Located at the interface of the 30S and 50S subunits, it traverses the body of the 30S subunit contacting proteins on the other side and probably holding the rRNA structure together. The combined cluster of proteins S8, S12 and S17 appears to hold together the shoulder and platform of the 30S subunit. The chain is Small ribosomal subunit protein uS12 from Prochlorococcus marinus (strain MIT 9301).